The primary structure comprises 534 residues: Endoglucanase 5 (534 aa).

A signal peptide spans 1–27 (MSDVSGRFVVAAAVVAVSLAMAAAAAA). D82 (nucleophile) is an active-site residue. Residues H432, D484, and E493 contribute to the active site. A disordered region spans residues 515–534 (RRRGEDAPPSSTSPVAEDDL).

Belongs to the glycosyl hydrolase 9 (cellulase E) family.

It is found in the secreted. It catalyses the reaction Endohydrolysis of (1-&gt;4)-beta-D-glucosidic linkages in cellulose, lichenin and cereal beta-D-glucans.. This chain is Endoglucanase 5, found in Oryza sativa subsp. japonica (Rice).